Consider the following 341-residue polypeptide: N-acetyl-gamma-glutamyl-phosphate reductase (341 aa).

Cysteine 146 is an active-site residue.

It belongs to the NAGSA dehydrogenase family. Type 1 subfamily.

The protein localises to the cytoplasm. The catalysed reaction is N-acetyl-L-glutamate 5-semialdehyde + phosphate + NADP(+) = N-acetyl-L-glutamyl 5-phosphate + NADPH + H(+). It functions in the pathway amino-acid biosynthesis; L-arginine biosynthesis; N(2)-acetyl-L-ornithine from L-glutamate: step 3/4. Catalyzes the NADPH-dependent reduction of N-acetyl-5-glutamyl phosphate to yield N-acetyl-L-glutamate 5-semialdehyde. This chain is N-acetyl-gamma-glutamyl-phosphate reductase, found in Limosilactobacillus fermentum (strain NBRC 3956 / LMG 18251) (Lactobacillus fermentum).